Reading from the N-terminus, the 124-residue chain is Fluoride-specific ion channel FluC (124 aa).

Transmembrane regions (helical) follow at residues 4–24, 35–55, 70–90, and 95–115; these read ILFV…ISIF, FGTL…YALG, VGLL…LLLI, and WLKA…MVYL. The Na(+) site is built by Gly74 and Thr77.

Belongs to the fluoride channel Fluc/FEX (TC 1.A.43) family.

Its subcellular location is the cell inner membrane. The enzyme catalyses fluoride(in) = fluoride(out). With respect to regulation, na(+) is not transported, but it plays an essential structural role and its presence is essential for fluoride channel function. Its function is as follows. Fluoride-specific ion channel. Important for reducing fluoride concentration in the cell, thus reducing its toxicity. This is Fluoride-specific ion channel FluC from Shewanella woodyi (strain ATCC 51908 / MS32).